A 657-amino-acid chain; its full sequence is Probable potassium transport system protein Kup (657 aa).

12 helical membrane passes run 14–34, 47–67, 96–116, 140–160, 166–186, 201–221, 242–262, 283–303, 340–360, 371–391, 396–416, and 425–445; these read IGGL…SPLY, ADIV…QTTI, IQWL…DGII, TIVY…QFGT, FFAP…FIQI, AYHL…VFLC, ISWI…AAYL, LIMP…AAVI, LYIP…VLHF, GLAI…YLIM, LYFM…FLIA, and GYVT…WYLA.

Belongs to the HAK/KUP transporter (TC 2.A.72) family.

It is found in the cell inner membrane. The catalysed reaction is K(+)(in) + H(+)(in) = K(+)(out) + H(+)(out). In terms of biological role, transport of potassium into the cell. Likely operates as a K(+):H(+) symporter. This is Probable potassium transport system protein Kup from Flavobacterium johnsoniae (strain ATCC 17061 / DSM 2064 / JCM 8514 / BCRC 14874 / CCUG 350202 / NBRC 14942 / NCIMB 11054 / UW101) (Cytophaga johnsonae).